Here is a 639-residue protein sequence, read N- to C-terminus: MEGINNNSQPMGVGQPHHPVNHTRPFFYVQPPSQPYFMYQWPMNPYGHYGFPGPALHFGRPYMAPYQFMQYPGYVIPHAPMQPIDYRRINPHYPSVASYDLRVRHHFQNAGMHRETACSEVQTDPSDSVNKLIDKIESLKACELGSDKGPNNVVSSTPDVVQGEKLTRLNEDSNLEVATKECKEDPVTRPTTYSDSAYDAESSQGRLDECVFSDVLPLDSSSVHEEEEEEEKDVNEEDEPQTVADEICSQNEMSASTTSNVFCSGVQSIADPTECHDLEKLGDEQKQDIPSADAAAVIEPLISLSEDFDLPYQILRLPCNKTTTGLSLEREIDPLVYFDSPSTLLPPQNYLSSIGSAYSYSYYPQVTQERQSVLSPSIDELSSRDEMFSTDVEDLEVVPGHVYVGGGRLAEASDMPVRSRKELPSVDKTCSVCQKTCACCGSTLQDEVGMCKMAEHSHPERDEMSDQDCDYDLEAEVRSNCESPRVSKRKCCSRHALPSCGHHCAKHRHRKLLCEGQESCDLREQARVHPKGECCEEYGALAKADKRIQKGALCRPCIEQQWREGVVSDQENWASCGAKPRSWRQVTGPQDQGRTPLRRSTCKSIHQQRPRSEYNDYDETEFTYCQRGRGSMKKRGSRY.

Residues 178–187 show a composition bias toward basic and acidic residues; that stretch reads ATKECKEDPV. Disordered stretches follow at residues 178 to 205, 218 to 242, and 581 to 614; these read ATKE…SSQG, LDSS…EPQT, and RSWR…RSEY. Residues 189–205 are compositionally biased toward polar residues; it reads RPTTYSDSAYDAESSQG. The span at 225 to 240 shows a compositional bias: acidic residues; the sequence is EEEEEEEKDVNEEDEP. A compositionally biased stretch (polar residues) spans 584 to 593; that stretch reads RQVTGPQDQG. The segment covering 596–609 has biased composition (basic residues); the sequence is PLRRSTCKSIHQQR. Arg627 and Arg629 each carry symmetric dimethylarginine. Short sequence motifs (RG Motif) lie at residues 627-628, 629-630, and 635-636; these read RG.

As to quaternary structure, specifically interacts (when methylated) with tdrd6 (via Tudor domain); interaction is responsible for recruitment of different protein complexes to germ plasm. Interacts with rbpms2 and dazl; interaction mediates Balbiani body formation. Interacts with kif5ba; interaction leads to buc enrichment at the embryonic cleavage furrows and mediates dorsoventral patterning. Symmetric dimethylarginine modification promotes interaction with tdrd6.

It is found in the cytoplasm. It localises to the cleavage furrow. Prion-like protein required for the formation of Balbiani body (electron-dense aggregates in the oocyte) and germ plasm assembly, and for the establishment of oocyte polarity during early oogenesis. Mobility and aggregation properties are improved by tudor domain-containing protein tdrd6 through interaction with dimethylated arginines Tri-RG domains. Establishes oocyte polarity through interactions with RNA-binding proteins rbpms2 and dazl, initiating a positive feedback loop amplification mechanism in the Balbiani body. Interaction of BUC protein and mRNA with rbpms2 and dazl is required to mediate Balbiani body formation. Involved in recruitment of germ plasm to embryonic cleavage furrows and dorsoventral patterning through interaction with Kinesin-1/KIF5BA. In Danio rerio (Zebrafish), this protein is Bucky ball.